We begin with the raw amino-acid sequence, 584 residues long: Adenine deaminase (584 aa).

Belongs to the metallo-dependent hydrolases superfamily. Adenine deaminase family. Requires Mn(2+) as cofactor.

The enzyme catalyses adenine + H2O + H(+) = hypoxanthine + NH4(+). This is Adenine deaminase from Methanococcoides burtonii (strain DSM 6242 / NBRC 107633 / OCM 468 / ACE-M).